A 403-amino-acid chain; its full sequence is Na(+)-translocating NADH-quinone reductase subunit B (403 aa).

A run of 4 helical transmembrane segments spans residues 56–76 (MMILVWLCTFPAMFFGMWNTG), 121–141 (AYFLPIYAVTFIVGGFWEVLF), 164–184 (LPPSIPLWQVAMGISFGVVIG), and 195–212 (FLNPALVGRAFLFFAYPA). At threonine 230 the chain carries FMN phosphoryl threonine. Helical transmembrane passes span 237-257 (AGGVEGVVSAGVSWMDAFLGI), 265-285 (TSTLAILIGGAVLLLTKIAAW), 287-307 (IVAGVMVGMVVLSSLFNLIGS), 312-332 (MFAMPWYWHLVAGGFAFGTLF), 348-368 (WAFGILIGVMVVLIRVVNPAF), and 371-391 (GMMLAILFGNLCAPLIDHFVV).

It belongs to the NqrB/RnfD family. Composed of six subunits; NqrA, NqrB, NqrC, NqrD, NqrE and NqrF. It depends on FMN as a cofactor.

The protein resides in the cell inner membrane. The catalysed reaction is a ubiquinone + n Na(+)(in) + NADH + H(+) = a ubiquinol + n Na(+)(out) + NAD(+). Its function is as follows. NQR complex catalyzes the reduction of ubiquinone-1 to ubiquinol by two successive reactions, coupled with the transport of Na(+) ions from the cytoplasm to the periplasm. NqrA to NqrE are probably involved in the second step, the conversion of ubisemiquinone to ubiquinol. The chain is Na(+)-translocating NADH-quinone reductase subunit B from Azotobacter vinelandii (strain DJ / ATCC BAA-1303).